The following is a 652-amino-acid chain: DNA ligase (652 aa).

Residues 29-33 (DSEYD), 78-79 (SL), and Glu107 contribute to the NAD(+) site. Lys109 (N6-AMP-lysine intermediate) is an active-site residue. NAD(+) contacts are provided by Arg130, Glu164, Lys278, and Lys302. Zn(2+)-binding residues include Cys395, Cys398, Cys413, and Cys418. One can recognise a BRCT domain in the interval 577–652 (VADAALSGLT…VRDEAWLESL (76 aa)).

The protein belongs to the NAD-dependent DNA ligase family. LigA subfamily. Mg(2+) is required as a cofactor. The cofactor is Mn(2+).

It carries out the reaction NAD(+) + (deoxyribonucleotide)n-3'-hydroxyl + 5'-phospho-(deoxyribonucleotide)m = (deoxyribonucleotide)n+m + AMP + beta-nicotinamide D-nucleotide.. Its function is as follows. DNA ligase that catalyzes the formation of phosphodiester linkages between 5'-phosphoryl and 3'-hydroxyl groups in double-stranded DNA using NAD as a coenzyme and as the energy source for the reaction. It is essential for DNA replication and repair of damaged DNA. The protein is DNA ligase of Streptococcus pneumoniae (strain CGSP14).